The sequence spans 257 residues: uncharacterized protein (257 aa).

A signal peptide spans 1 to 22 (MGYLKRFALYISVMILMFAIAG). C23 carries N-palmitoyl cysteine lipidation. The S-diacylglycerol cysteine moiety is linked to residue C23.

Belongs to the staphylococcal tandem lipoprotein family.

Its subcellular location is the cell membrane. This is an uncharacterized protein from Staphylococcus aureus (strain MRSA252).